The primary structure comprises 327 residues: 2-methoxy-6-polyprenyl-1,4-benzoquinol methylase, mitochondrial (327 aa).

The N-terminal 43 residues, 1–43, are a transit peptide targeting the mitochondrion; the sequence is MAAPIRAFVLRVLSDSTRNIHHVLRCRSKYLCRRAAITARRGY. Residues threonine 117, aspartate 171, and 199–200 each bind S-adenosyl-L-methionine; that span reads DA.

The protein belongs to the class I-like SAM-binding methyltransferase superfamily. MenG/UbiE family. Component of a multi-subunit COQ enzyme complex, composed of at least coq3, coq4, coq5, coq6, coq7 and coq9.

The protein localises to the mitochondrion inner membrane. It carries out the reaction a 2-methoxy-6-(all-trans-polyprenyl)benzene-1,4-diol + S-adenosyl-L-methionine = a 5-methoxy-2-methyl-3-(all-trans-polyprenyl)benzene-1,4-diol + S-adenosyl-L-homocysteine + H(+). It participates in cofactor biosynthesis; ubiquinone biosynthesis. Functionally, methyltransferase required for the conversion of 2-polyprenyl-6-methoxy-1,4-benzoquinol (DDMQH2) to 2-polyprenyl-3-methyl-6-methoxy-1,4-benzoquinol (DMQH2). The polypeptide is 2-methoxy-6-polyprenyl-1,4-benzoquinol methylase, mitochondrial (Danio rerio (Zebrafish)).